We begin with the raw amino-acid sequence, 121 residues long: Large ribosomal subunit protein uL14 (121 aa).

This sequence belongs to the universal ribosomal protein uL14 family. As to quaternary structure, part of the 50S ribosomal subunit. Forms a cluster with proteins L3 and L19. In the 70S ribosome, L14 and L19 interact and together make contacts with the 16S rRNA in bridges B5 and B8.

In terms of biological role, binds to 23S rRNA. Forms part of two intersubunit bridges in the 70S ribosome. In Synechococcus sp. (strain CC9902), this protein is Large ribosomal subunit protein uL14.